Consider the following 511-residue polypeptide: 2,3-bisphosphoglycerate-independent phosphoglycerate mutase (511 aa).

Mn(2+)-binding residues include D14 and S64. S64 acts as the Phosphoserine intermediate in catalysis. Substrate is bound by residues H125, 155-156 (RD), R187, R193, 259-262 (RADR), and K333. D400, H404, D441, H442, and H460 together coordinate Mn(2+).

Belongs to the BPG-independent phosphoglycerate mutase family. In terms of assembly, monomer. Mn(2+) serves as cofactor.

It carries out the reaction (2R)-2-phosphoglycerate = (2R)-3-phosphoglycerate. Its pathway is carbohydrate degradation; glycolysis; pyruvate from D-glyceraldehyde 3-phosphate: step 3/5. In terms of biological role, catalyzes the interconversion of 2-phosphoglycerate and 3-phosphoglycerate. The polypeptide is 2,3-bisphosphoglycerate-independent phosphoglycerate mutase (Pseudomonas putida (strain GB-1)).